Here is a 203-residue protein sequence, read N- to C-terminus: High frequency lysogenization protein HflD homolog (203 aa).

The protein belongs to the HflD family.

The protein resides in the cytoplasm. It localises to the cell inner membrane. In Aeromonas salmonicida (strain A449), this protein is High frequency lysogenization protein HflD homolog.